The following is a 165-amino-acid chain: MNLFDIEGLLVADSQGEILYRRVFSKEEEIAAKIAEKAAGDRESISMFYDRIVMCKRLDEVLLIIYSPMDVNEPFVGQVFDEFTAAFIGIVKTPTRERVWKKYDQIVLLVAEFLYEGIVMSGKSDEMLDKLPKRNFEGVDGMKVPRGFASFLHKATKSLSIGSNK.

This sequence belongs to the adaptor complexes small subunit family. In terms of assembly, oligomeric complex that consists of at least the alpha, beta, beta', gamma, delta, epsilon and zeta subunits.

The protein localises to the cytoplasm. The protein resides in the golgi apparatus membrane. It is found in the cytoplasmic vesicle. Its subcellular location is the COPI-coated vesicle membrane. In terms of biological role, the coatomer is a cytosolic protein complex that binds to dilysine motifs and reversibly associates with Golgi non-clathrin-coated vesicles, which further mediate biosynthetic protein transport from the ER, via the Golgi up to the trans Golgi network. Coatomer complex is required for budding from Golgi membranes, and is essential for the retrograde Golgi-to-ER transport of dilysine-tagged proteins. The zeta subunit may be involved in regulating the coat assembly and, hence, the rate of biosynthetic protein transport due to its association-dissociation properties with the coatomer complex. The sequence is that of Coatomer subunit zeta from Encephalitozoon cuniculi (strain GB-M1) (Microsporidian parasite).